The sequence spans 293 residues: Inner membrane ABC transporter permease protein YcjO (293 aa).

Over 1-12 (MNRLFSGRSDMP) the chain is Periplasmic. A helical membrane pass occupies residues 13–33 (FALLLLAPSLLLLGGLVAWPM). The Cytoplasmic segment spans residues 34–77 (VSNIEISFLRLPLNPNIESTFVGVSNYVRILSDPGFWHSLWMTV). One can recognise an ABC transmembrane type-1 domain in the interval 73–283 (LWMTVWYTAL…IIIFAVILLT (211 aa)). A helical membrane pass occupies residues 78 to 98 (WYTALVVAGSTVLGLAVAMFF). The Periplasmic segment spans residues 99–110 (NREFRLRKTARS). Residues 111–131 (LVILSYVTPSISLVFAWKYMF) form a helical membrane-spanning segment. At 132–135 (NNGY) the chain is on the cytoplasmic side. Residues 136-156 (GIVNYLGVDLLHLYEQAPLWF) form a helical membrane-spanning segment. Residues 157-162 (DNPGSS) lie on the Periplasmic side of the membrane. Residues 163-183 (FVLVVLFAIWRYFPYAFISFL) form a helical membrane-spanning segment. At 184 to 214 (AILQTIDKSLYEAAEMDGANAWQRFRIVTLP) the chain is on the cytoplasmic side. The helical transmembrane segment at 215–235 (AIMPVLATVVTLRTIWMFYMF) threads the bilayer. At 236–261 (ADVYLLTTKVDILGVYLYKTAFAFND) the chain is on the periplasmic side. The chain crosses the membrane as a helical span at residues 262–282 (LGKAAAISVVLFIIIFAVILL). Topologically, residues 283 to 293 (TRKRVNLNGNK) are cytoplasmic.

Belongs to the binding-protein-dependent transport system permease family. MalFG subfamily.

Its subcellular location is the cell inner membrane. Its function is as follows. Probably part of the binding-protein-dependent transport system YcjNOP. Probably responsible for the translocation of the substrate across the membrane. The chain is Inner membrane ABC transporter permease protein YcjO (ycjO) from Escherichia coli (strain K12).